The chain runs to 238 residues: MEEGLQRCFVLHRRPYSESSLILDVFSEEYGRLSIISKGARSKRSNLKGVLQAFTPLLMKWSGKGSMRTLRQAETISLAIPLTGINLYSALYINELVVRVIEQETPYPALFLDYLTALTELAQTKNPEPALRRFELALLSSLGYGVDFLHCAGSGEMVSPEMTYRYREQKGFMASIRHDPLMSFKGDELIAISERRFITPEQLKAAKRFTRIALKPYLGGKPLKSRELFLPRTRSILK.

The protein belongs to the RecO family.

Involved in DNA repair and RecF pathway recombination. This is DNA repair protein RecO from Aliivibrio salmonicida (strain LFI1238) (Vibrio salmonicida (strain LFI1238)).